We begin with the raw amino-acid sequence, 38 residues long: Large ribosomal subunit protein bL36 (38 aa).

The protein belongs to the bacterial ribosomal protein bL36 family.

The sequence is that of Large ribosomal subunit protein bL36 from Lactobacillus johnsonii (strain CNCM I-12250 / La1 / NCC 533).